The following is a 20-amino-acid chain: Tetracycline resistance leader peptide (20 aa).

Residues 1–20 are disordered; the sequence is MKCNKMNRVQLKEGSVSMTL.

This Bacillus subtilis (strain 168) protein is Tetracycline resistance leader peptide (tetL).